Here is a 705-residue protein sequence, read N- to C-terminus: Polyribonucleotide nucleotidyltransferase (705 aa).

Asp485 and Asp491 together coordinate Mg(2+). Residues 552-611 (PRVYTMTIAPEKIRDVIGAGGKTINKIIGETGVQIDIKEDGKIYVMSSDSVGANRALKMI) form the KH domain. The 69-residue stretch at 621 to 689 (GEIYLGKVTR…DQGRINLSRR (69 aa)) folds into the S1 motif domain.

The protein belongs to the polyribonucleotide nucleotidyltransferase family. The cofactor is Mg(2+).

It is found in the cytoplasm. It catalyses the reaction RNA(n+1) + phosphate = RNA(n) + a ribonucleoside 5'-diphosphate. Its function is as follows. Involved in mRNA degradation. Catalyzes the phosphorolysis of single-stranded polyribonucleotides processively in the 3'- to 5'-direction. This Clostridium tetani (strain Massachusetts / E88) protein is Polyribonucleotide nucleotidyltransferase.